The primary structure comprises 310 residues: uncharacterized protein (310 aa).

The segment at methionine 1–threonine 70 is disordered. The span at alanine 49 to arginine 62 shows a compositional bias: basic residues. S-adenosyl-L-methionine-binding residues include glycine 262, valine 282, and leucine 291.

Belongs to the class IV-like SAM-binding methyltransferase superfamily. RNA methyltransferase TrmH family.

This is an uncharacterized protein from Mycobacterium ulcerans (strain Agy99).